A 185-amino-acid chain; its full sequence is Ribosome-recycling factor (185 aa).

This sequence belongs to the RRF family.

It localises to the cytoplasm. Functionally, responsible for the release of ribosomes from messenger RNA at the termination of protein biosynthesis. May increase the efficiency of translation by recycling ribosomes from one round of translation to another. The chain is Ribosome-recycling factor from Aromatoleum aromaticum (strain DSM 19018 / LMG 30748 / EbN1) (Azoarcus sp. (strain EbN1)).